The sequence spans 402 residues: MTSTQRLWSGALPLLTALIVSIAATASLAGPRARDLGVPFEGTPGALNAITDVAGVEVGHTTVISGDGAMVIGKGPYRTGVTIIHPLGKTSLDGVAAGRAVINGTGEWTGMHLVDEVGQFLGPIALTGTGNVGLVHQSMMDWSVGKVPEEALFSRLLPVVAETLDNRLNDVFGHGLTRDHVFAALDGAKGGPVAEGNVGGGTGMIAYTFKGGIGTSSRVVSAGDTRYTVGVLVQANHGDRNDLRIAGVQIGKEIKGAWPEVNGIVAAGPDAGKPQDKNSLLIVIATDAPLMPHQLERMARRAALGVGRNGSTAGALSGEFALAFSTSHVIPLGGKPRLPAIINDTDSETMNALFRGVVQATEEALVNQLVASETMTGANNAKVYGIPHDQLARIMKARFPRR.

The first 29 residues, 1–29, serve as a signal peptide directing secretion; the sequence is MTSTQRLWSGALPLLTALIVSIAATASLA. Ser-279 serves as the catalytic Nucleophile. Active-site proton donor/acceptor residues include Ser-317 and Glu-319.

It belongs to the peptidase S58 family. As to quaternary structure, heterooctamer of 4 heterodimers ((alpha:beta)4); each heterodimer is composed of an alpha subunit and a beta subunit processed from the same precursor. Post-translationally, autoproteolytic processing to generate the alpha and beta subunit is required for self-activation and is proposed to use a similar mechanism as substrate cleavage.

Its subcellular location is the periplasm. It carries out the reaction Cleaves N-terminal beta-homoamino acids from peptides composed of 2 to 6 amino acids.. Inhibited by AEBSF (4-(2-aminoethyl)benzenesulfonyl fluoride, Pefabloc SC), ampicillin and AMP(hyd) (ampillicin-derived penicilloic acid). In terms of biological role, beta-aminopeptidase that can cleave synthetic beta-peptides which consist of backbone-elongated beta-amino acid residues that are not processed by common proteolytic enzymes. Can cleave the beta-peptides beta-homoVal-beta-homoAla-beta-homoLeu and beta-homoAla-beta-homoLeu. Requires a beta-amino acid at the N-terminus of peptide substrates and cleaves the peptide bond between the N-terminal beta-amino acid and the amino acid at the second position of tripeptidic substrates of the general structure H-betahXaa-Ile-betahTyr-OH according to the following preferences with regard to the side chain of the N-terminal beta-amino acid: aliphatic and aromatic &gt; OH-containing &gt; hydrogen, basic and polar. This chain is Beta-peptidyl aminopeptidase BapA, found in Sphingosinicella xenopeptidilytica.